The sequence spans 296 residues: Fructose-bisphosphate aldolase class 1 (296 aa).

The active-site Proton acceptor is E175. The active-site Schiff-base intermediate with dihydroxyacetone-P is the K212.

Belongs to the class I fructose-bisphosphate aldolase family.

It carries out the reaction beta-D-fructose 1,6-bisphosphate = D-glyceraldehyde 3-phosphate + dihydroxyacetone phosphate. Its pathway is carbohydrate degradation; glycolysis; D-glyceraldehyde 3-phosphate and glycerone phosphate from D-glucose: step 4/4. This Staphylococcus aureus (strain MSSA476) protein is Fructose-bisphosphate aldolase class 1.